The primary structure comprises 590 residues: Protein I'm not dead yet (590 aa).

The next 11 helical transmembrane spans lie at 43–63 (GLVV…NEGA), 82–102 (ALPL…MGIM), 115–135 (TLVM…CNLH), 153–173 (LHFG…NAAC), 224–244 (LCYY…TIIG), 270–290 (TFMF…FVFL), 329–349 (LGPM…MVVM), 373–393 (SMPT…YAFL), 457–477 (VLPN…LTAF), 509–529 (AGLA…NALV), and 540–560 (MAIA…VFCQ).

The protein belongs to the SLC13A/DASS transporter (TC 2.A.47) family. NADC subfamily. In terms of tissue distribution, in adults, abundantly expressed in the fat body, basolateral region of midgut cells and oenocytes. Low level expression is seen in the halteres, procardia, restricted regions of the esophagus and hindgut, base of the legs and in a subset of cells in the third segment of the antennae.

It localises to the basolateral cell membrane. Its function is as follows. Cation-independent electroneutral transporter (not associated with membrane depolarization) of a variety of tricarboxylic and dicarboxylic acid-cycle intermediates. There is also small, but detectable, transport of monocarboxylics. Transport is through the epithelium of the gut and across the plasma membranes of organs involved in intermediary metabolism and storage. Affinity for substrates is citrate &gt; succinate &gt; pyruvate. Fumarate, a-ketoglutarate, and glutarate are also transported, but not lactate. Transport mechanism that is not coupled to Na(+), K(+), or Cl(-). Function is shown in Xenopus oocytes and human retinal pigment epithelial (HRPE) cell lines. The sequence is that of Protein I'm not dead yet (Indy) from Drosophila melanogaster (Fruit fly).